Consider the following 303-residue polypeptide: UDP-3-O-acyl-N-acetylglucosamine deacetylase (303 aa).

3 residues coordinate Zn(2+): His78, His237, and Asp241. The active-site Proton donor is the His264.

It belongs to the LpxC family. Zn(2+) is required as a cofactor.

It carries out the reaction a UDP-3-O-[(3R)-3-hydroxyacyl]-N-acetyl-alpha-D-glucosamine + H2O = a UDP-3-O-[(3R)-3-hydroxyacyl]-alpha-D-glucosamine + acetate. It functions in the pathway glycolipid biosynthesis; lipid IV(A) biosynthesis; lipid IV(A) from (3R)-3-hydroxytetradecanoyl-[acyl-carrier-protein] and UDP-N-acetyl-alpha-D-glucosamine: step 2/6. Catalyzes the hydrolysis of UDP-3-O-myristoyl-N-acetylglucosamine to form UDP-3-O-myristoylglucosamine and acetate, the committed step in lipid A biosynthesis. The sequence is that of UDP-3-O-acyl-N-acetylglucosamine deacetylase from Xanthomonas oryzae pv. oryzae (strain MAFF 311018).